Here is a 353-residue protein sequence, read N- to C-terminus: Photosystem II D2 protein (353 aa).

Thr2 is modified (N-acetylthreonine). Thr2 bears the Phosphothreonine mark. Residues 41 to 61 (CAYFALGGWLTGTTFVTSWYT) form a helical membrane-spanning segment. A chlorophyll a-binding site is contributed by His118. The chain crosses the membrane as a helical span at residues 125-141 (GFMLRQFEIARSVQLRP). 2 residues coordinate pheophytin a: Gln130 and Asn143. The chain crosses the membrane as a helical span at residues 153-166 (VFVSVFLIYPLGQS). His198 lines the chlorophyll a pocket. Residues 208-228 (AALLCAIHGATVENTIFEDGD) form a helical membrane-spanning segment. His215 and Phe262 together coordinate a plastoquinone. His215 is a binding site for Fe cation. His269 serves as a coordination point for Fe cation. Residues 279 to 295 (GLWMSAVGVVGLAVNLR) traverse the membrane as a helical segment.

It belongs to the reaction center PufL/M/PsbA/D family. As to quaternary structure, PSII is composed of 1 copy each of membrane proteins PsbA, PsbB, PsbC, PsbD, PsbE, PsbF, PsbH, PsbI, PsbJ, PsbK, PsbL, PsbM, PsbT, PsbX, PsbY, PsbZ, Psb30/Ycf12, at least 3 peripheral proteins of the oxygen-evolving complex and a large number of cofactors. It forms dimeric complexes. The D1/D2 heterodimer binds P680, chlorophylls that are the primary electron donor of PSII, and subsequent electron acceptors. It shares a non-heme iron and each subunit binds pheophytin, quinone, additional chlorophylls, carotenoids and lipids. There is also a Cl(-1) ion associated with D1 and D2, which is required for oxygen evolution. The PSII complex binds additional chlorophylls, carotenoids and specific lipids. serves as cofactor.

It localises to the plastid. The protein resides in the chloroplast thylakoid membrane. The enzyme catalyses 2 a plastoquinone + 4 hnu + 2 H2O = 2 a plastoquinol + O2. Its function is as follows. Photosystem II (PSII) is a light-driven water:plastoquinone oxidoreductase that uses light energy to abstract electrons from H(2)O, generating O(2) and a proton gradient subsequently used for ATP formation. It consists of a core antenna complex that captures photons, and an electron transfer chain that converts photonic excitation into a charge separation. The D1/D2 (PsbA/PsbD) reaction center heterodimer binds P680, the primary electron donor of PSII as well as several subsequent electron acceptors. D2 is needed for assembly of a stable PSII complex. This chain is Photosystem II D2 protein, found in Chaetosphaeridium globosum (Charophycean green alga).